A 377-amino-acid chain; its full sequence is Oleosin-B4 (377 aa).

The polar stretch occupies residues 1-37 (MRNEIQNETAQTDQTQGSMFSFFNLFPFLLPMFEVIK). 3 helical membrane passes run 16 to 36 (QGSM…FEVI), 38 to 58 (MVVA…TLSG), and 69 to 89 (LFII…VLAA). The tract at residues 38–133 (MVVASVASVV…IIPESIKPSN (96 aa)) is hydrophobic. Repeat copies occupy residues 115–124 (IPESIKPSNI), 125–134 (IPESIKPSNI), and 135–144 (IPEGIKPSNI). A 3 X 10 AA tandem repeats of I-P-E-[SG]-I-K-P-S-N-[IV] region spans residues 115 to 144 (IPESIKPSNIIPESIKPSNIIPEGIKPSNI). The interval 158 to 377 (KIKAKKEEKS…SSHGSGGKHI (220 aa)) is disordered. Basic and acidic residues-rich tracts occupy residues 162-185 (KKEE…KGED) and 195-231 (DEDK…EGKH). A 2-1 repeat occupies 196–202 (EDKHGSG). The stretch at 196 to 202 (EDKHGSG) is one 2.1 repeat. The tract at residues 196–222 (EDKHGSGAKHGKGESKHGKGESTHGKG) is 3 X 6 AA tandem repeats of E-[SD]-[KT]-H-G-[KS]-G. One copy of the 2-2; truncated repeat lies at 204–208 (KHGKG). A run of 7 repeats spans residues 209–215 (ESKHGKG), 216–222 (ESTHGKG), 230–247 (KHGS…GSGG), 260–277 (KHES…GSEG), 278–295 (KHGS…GSGG), 296–313 (KHES…GSGG), and 355–359 (SSDGS). Residues 230-313 (KHGSGGSSMG…MGGGKHGSGG (84 aa)) are 4 X 18 AA tandem repeats of K-H-E-S-G-G-[SA]-[PSA]-M-G-G-G-K-H-G-S-[GE]-G. The segment covering 232 to 244 (GSGGSSMGGGKHG) has biased composition (gly residues). Positions 247–263 (GKHETGGKHGSGGKHES) are enriched in basic and acidic residues. Composition is skewed to gly residues over residues 280-292 (GSGG…GKHG) and 302-314 (SAMG…SGGK). Low complexity predominate over residues 350 to 369 (SSTSESSDGSSDGSSSDGSS). A 3 X 5 AA tandem repeats of S-S-D-G-S region spans residues 355-368 (SSDGSSDGSSSDGS). The 4-2; truncated repeat unit spans residues 360–363 (SDGS). A 4-3 repeat occupies 364–368 (SSDGS).

It belongs to the oleosin family. The full-length protein is found in the tapetal lipid bodies of immature anthers, the proteolytically cleaved C-terminal product is found on the coats of pollen grains. No expression is detected in other flower organs, siliques or seedlings.

It is found in the lipid droplet. The protein resides in the membrane. In terms of biological role, many of the major pollen coat proteins are derived from endoproteolytic cleavage of oleosin-like proteins. The sequence is that of Oleosin-B4 from Brassica napus (Rape).